Consider the following 894-residue polypeptide: Kinesin-like protein KIN-UB (894 aa).

The segment at 1–53 (MAMASSRNGAVRGSMRPVSGANSSNLRSSSFKSRIPSSAPAPRRSSSASIGAA) is disordered. Over residues 19-50 (SGANSSNLRSSSFKSRIPSSAPAPRRSSSASI) the composition is skewed to low complexity. A Kinesin motor domain is found at 60–402 (RVRVAVRLRP…ILFGQRAMKV (343 aa)). An ATP-binding site is contributed by 145-152 (GQTGTGKT). The D-BOX motif lies at 372-380 (RTSLIVTIG). A coiled-coil region spans residues 423 to 588 (VQLDKVIAEN…RSQLVQLTFE (166 aa)). 2 disordered regions span residues 530–550 (EEEV…GEGE) and 598–623 (RGAP…ESVN). Polar residues predominate over residues 603 to 623 (NSYSGTDSLPSRHSQARESVN). ARM repeat units follow at residues 626–665 (KAPF…NLAA), 667–707 (EANQ…NLAM), 709–749 (EVSQ…NLCG), and 751–790 (DKLQ…NFAK).

This sequence belongs to the TRAFAC class myosin-kinesin ATPase superfamily. Kinesin family. Ungrouped subfamily. As to quaternary structure, interacts (via C-terminus) with NEK5. As to expression, expressed in the basal regions and petioles of immature leaves and in the root elongation zone.

The protein localises to the cytoplasm. Its subcellular location is the cytoskeleton. Involved in the control of epidermal-cell morphogenesis in roots and helical growth of roots by promoting microtubule depolymerization and limiting the accumulation of endoplasmic microtubules. Seems to be involved in the control of cell-file rotation (or twisting). The sequence is that of Kinesin-like protein KIN-UB from Arabidopsis thaliana (Mouse-ear cress).